The sequence spans 322 residues: MNWLTNVVRPKIRNILRRETPENLWIKCPDTGQLVFYKDVEQNQFVIPGSNYHMRMGALARLRSVFDNETWYDVALPEVTADPLKFRDERKYADRIKDARTKTGAHDAVKVGYGKLEGLGVVAAVQDFDFMGGSLGMAAGEAIIRGLELAVEKHAPFIMFAASGGARMQEGILSLMQMPRTTVAVQMLREAGLPYIVVLTNPTTGGVTASYAMLGDIQLAEPGALIGFAGARVIEQTIREKLPDGFQRAEYLRDHGMVDMVVHRHELRPTLARLCRILTKTPLPAVEEIAASDDAAQDAEAAAATEIVVTPPEAPSPTAPQA.

The CoA carboxyltransferase N-terminal domain maps to Leu24–Asp293.

It belongs to the AccD/PCCB family. As to quaternary structure, acetyl-CoA carboxylase is a heterohexamer composed of biotin carboxyl carrier protein (AccB), biotin carboxylase (AccC) and two subunits each of ACCase subunit alpha (AccA) and ACCase subunit beta (AccD).

It localises to the cytoplasm. The catalysed reaction is N(6)-carboxybiotinyl-L-lysyl-[protein] + acetyl-CoA = N(6)-biotinyl-L-lysyl-[protein] + malonyl-CoA. It functions in the pathway lipid metabolism; malonyl-CoA biosynthesis; malonyl-CoA from acetyl-CoA: step 1/1. In terms of biological role, component of the acetyl coenzyme A carboxylase (ACC) complex. Biotin carboxylase (BC) catalyzes the carboxylation of biotin on its carrier protein (BCCP) and then the CO(2) group is transferred by the transcarboxylase to acetyl-CoA to form malonyl-CoA. This chain is Acetyl-coenzyme A carboxylase carboxyl transferase subunit beta, found in Rhodopseudomonas palustris (strain BisB5).